The chain runs to 328 residues: Malate dehydrogenase (328 aa).

Position 13–19 (13–19) interacts with NAD(+); it reads GAAGQIS. Substrate is bound by residues arginine 94 and arginine 100. Residues asparagine 107, glutamine 114, and 131–133 contribute to the NAD(+) site; that span reads VGN. Residues asparagine 133 and arginine 164 each coordinate substrate. Histidine 189 acts as the Proton acceptor in catalysis.

The protein belongs to the LDH/MDH superfamily. MDH type 2 family.

It carries out the reaction (S)-malate + NAD(+) = oxaloacetate + NADH + H(+). Its function is as follows. Catalyzes the reversible oxidation of malate to oxaloacetate. The polypeptide is Malate dehydrogenase (Alcanivorax borkumensis (strain ATCC 700651 / DSM 11573 / NCIMB 13689 / SK2)).